Here is an 809-residue protein sequence, read N- to C-terminus: Plasminogen (809 aa).

The first 19 residues, 1-19, serve as a signal peptide directing secretion; the sequence is MDHKEVVLLLLLFLKSGLG. Positions 20–98 constitute a PAN domain; it reads DSLDDYVNTQ…RDVVLFEKRI (79 aa). 24 cysteine pairs are disulfide-bonded: C49–C73, C53–C61, C103–C181, C124–C164, C152–C176, C185–C262, C188–C316, C206–C245, C234–C257, C275–C352, C296–C335, C324–C347, C377–C454, C398–C437, C426–C449, C480–C559, C501–C542, C530–C554, C566–C684, C576–C584, C606–C622, C698–C765, C728–C744, and C755–C783. 2 Kringle domains span residues 103 to 181 and 185 to 262; these read CKTG…IPEC and CMHC…IPRC. An O-linked (GalNAc...) threonine glycan is attached at T268. Kringle domains are found at residues 275 to 352, 377 to 454, and 480 to 559; these read CLKG…IPSC, CYRG…LKKC, and CMFG…VPQC. N308 is a glycosylation site (N-linked (GlcNAc...) asparagine). Residues 580 to 807 enclose the Peptidase S1 domain; it reads VVGGCVSIPH…FVTWIEEIMR (228 aa). S596 carries the phosphoserine modification. Residues H621 and D664 each act as charge relay system in the active site. The active-site Charge relay system is S759.

It belongs to the peptidase S1 family. Plasminogen subfamily. Interacts with CSPG4 and AMOT. Interacts (via the Kringle domains) with HRG; the interaction tethers PLG to the cell surface and enhances its activation. Interacts (via Kringle 4 domain) with ADA; the interaction stimulates PLG activation when in complex with DPP4. Angiostatin: Interacts with ATP5F1A; the interaction inhibits most of the angiogenic effects of angiostatin. Post-translationally, N-linked glycan contains N-acetyllactosamine, sialic acid and is core fucosylated. O-linked glycans consist of Gal-GalNAc disaccharide which is modified with up to 2 sialic acid residues (microheterogeneity). In terms of processing, in the presence of the inhibitor, the activation involves only cleavage after Arg-579, yielding two chains held together by two disulfide bonds. In the absence of the inhibitor, the activation involves additionally the removal of the activation peptide.

The protein resides in the secreted. The enzyme catalyses Preferential cleavage: Lys-|-Xaa &gt; Arg-|-Xaa, higher selectivity than trypsin. Converts fibrin into soluble products.. Converted into plasmin by plasminogen activators, both plasminogen and its activator being bound to fibrin. Cannot be activated with streptokinase. In terms of biological role, plasmin dissolves the fibrin of blood clots and acts as a proteolytic factor in a variety of other processes including embryonic development, tissue remodeling, tumor invasion, and inflammation. In ovulation, weakens the walls of the Graafian follicle. It activates the urokinase-type plasminogen activator, collagenases and several complement zymogens, such as C1, C4 and C5. Cleavage of fibronectin and laminin leads to cell detachment and apoptosis. Also cleaves fibrin, thrombospondin and von Willebrand factor. Its role in tissue remodeling and tumor invasion may be modulated by CSPG4. Binds to cells. In Sus scrofa (Pig), this protein is Plasminogen (PLG).